A 950-amino-acid chain; its full sequence is UPF0182 protein P9303_14611 (950 aa).

The next 9 helical transmembrane spans lie at 20–40, 53–73, 102–122, 141–161, 173–193, 209–229, 259–279, 308–328, and 335–355; these read LLLS…WLWF, WLWQ…CQLW, LLGC…LAWL, IWAL…MLGN, CFCF…ALAI, FGLG…AQLV, CDVM…LLWL, SLAS…PWIQ, and LIAS…APFV.

Belongs to the UPF0182 family.

It is found in the cell membrane. This Prochlorococcus marinus (strain MIT 9303) protein is UPF0182 protein P9303_14611.